Here is an 820-residue protein sequence, read N- to C-terminus: SART-1 family protein DOT2 (820 aa).

3 stretches are compositionally biased toward basic and acidic residues: residues 1 to 156 (MEVE…DNRG), 210 to 219 (EEKRNAEKQR), and 426 to 445 (LGSRKDGRRQAMKEEKERIE). Disordered stretches follow at residues 1–177 (MEVE…SALD), 210–248 (EEKRNAEKQRAQQLSRIFEEQDNLNQGENEDGEDGEHLS), 420–445 (GLGAEDLGSRKDGRRQAMKEEKERIE), 523–544 (SSTNQTTDDNTTTGDETQENTV), 564–617 (KPES…PDEN), 657–678 (KLVGIVDDDGGKESKDKESKDR), 729–748 (KLKQMKNSDTPSQSVQRMRE), and 762–820 (GHVK…RPKP). The residue at position 22 (serine 22) is a Phosphoserine. 3 coiled-coil regions span residues 58–120 (RDKE…EKEK), 171–235 (KEAS…NLNQ), and 433–510 (RRQA…KEEA). Positions 525 to 543 (TNQTTDDNTTTGDETQENT) are enriched in low complexity. The span at 582-591 (VEVKEEHPDG) shows a compositional bias: basic and acidic residues. Over residues 596 to 606 (NDTDMDAAEDS) the composition is skewed to acidic residues. 2 stretches are compositionally biased toward basic and acidic residues: residues 607–617 (SDTKEITPDEN) and 665–678 (DGGKESKDKESKDR). Polar residues-rich tracts occupy residues 733–744 (MKNSDTPSQSVQ) and 767–776 (GQTSDPQSGF). Positions 792 to 807 (GDRKVEHFLGIKRKSE) are enriched in basic and acidic residues.

Belongs to the SNU66/SART1 family. Expressed in lateral root cap, columella, meristem and quiescent center (QC). Expressed in young leaves.

It localises to the nucleus. Its function is as follows. Plays a role in root, shoot and flower development. Probably required for normal root and shoot meristem organization and maintenance and the proper expression of PIN and PLT genes. Involved in leaf vasculature patterning. This Arabidopsis thaliana (Mouse-ear cress) protein is SART-1 family protein DOT2.